The sequence spans 287 residues: Rhodopsin (287 aa).

Residues 1–5 lie on the Extracellular side of the membrane; it reads VNGAA. Residues 6–30 traverse the membrane as a helical segment; sequence YAGLCAYMFLLILVGFPVNFLTLYV. Residues 31–42 are Cytoplasmic-facing; sequence TLEHKKLRTPLN. The chain crosses the membrane as a helical span at residues 43–65; it reads YILLNLAVADLFMVLGGFTTTMY. The Extracellular segment spans residues 66 to 79; sequence TSAHGYFVLGRLGC. C79 and C156 are joined by a disulfide. A helical membrane pass occupies residues 80–102; the sequence is NVEGFFATLGGEIALWSLVVLAV. Positions 103–105 match the 'Ionic lock' involved in activated form stabilization motif; sequence ERW. Residues 103–121 lie on the Cytoplasmic side of the membrane; the sequence is ERWIVVCKPISNFRFTEEH. The helical transmembrane segment at 122-142 threads the bilayer; that stretch reads AIMGLGFNWVMASACAVPPLV. The Extracellular portion of the chain corresponds to 143–171; sequence GWSRYIPEGMQCSCGINYYTRSEGFNNES. N169 carries N-linked (GlcNAc...) asparagine glycosylation. A helical membrane pass occupies residues 172–193; it reads LVMKMLICHFLIPLFVIFFCYG. The Cytoplasmic segment spans residues 194 to 221; sequence RMLCAVKEAAAAQQESETTQRAEREVSR. Residues 222 to 243 form a helical membrane-spanning segment; that stretch reads MVVIMVISFLVCWLPYASVAWY. The Extracellular segment spans residues 244–255; it reads IFCNQGSEFGPV. The helical transmembrane segment at 256 to 277 threads the bilayer; sequence FMTLPAFFAKSASIYNPLIYIC. The residue at position 265 (K265) is an N6-(retinylidene)lysine. Residues 278 to 287 are Cytoplasmic-facing; the sequence is MNKHSRHCMI.

It belongs to the G-protein coupled receptor 1 family. Opsin subfamily. Post-translationally, phosphorylated on some or all of the serine and threonine residues present in the C-terminal region. Contains one covalently linked retinal chromophore.

It localises to the membrane. Its subcellular location is the cell projection. It is found in the cilium. The protein localises to the photoreceptor outer segment. Functionally, photoreceptor required for image-forming vision at low light intensity. While most salt water fish species use retinal as chromophore, most freshwater fish use 3-dehydroretinal, or a mixture of retinal and 3-dehydroretinal. Light-induced isomerization of 11-cis to all-trans retinal triggers a conformational change that activates signaling via G-proteins. Subsequent receptor phosphorylation mediates displacement of the bound G-protein alpha subunit by arrestin and terminates signaling. The protein is Rhodopsin (rho) of Taurulus bubalis (Long-spined sea scorpion).